A 493-amino-acid polypeptide reads, in one-letter code: Activin receptor type-1C (493 aa).

The signal sequence occupies residues 1–25 (MTPARRSALSLALLLVALASDLAAG). Topologically, residues 26–113 (LKCVCLLCDS…PDAPRLGPTE (88 aa)) are extracellular. The chain crosses the membrane as a helical span at residues 114–134 (LTVVITVPVCLLSIAAMLTIW). The Cytoplasmic segment spans residues 135–493 (ACQDRQCTYR…QLCVKEDCKA (359 aa)). In terms of domain architecture, GS spans 165 to 194 (KTLKDLIYDATASGSGSGPPLLVQRTIART). Residues 195–485 (IVLQEIVGKG…LRVKKTISQL (291 aa)) form the Protein kinase domain. ATP-binding positions include 201-209 (VGKGRFGEV) and Lys-222. Residue Asp-323 is the Proton acceptor of the active site.

It belongs to the protein kinase superfamily. TKL Ser/Thr protein kinase family. TGFB receptor subfamily. Binds the type 2 receptor protein ACVR2A. Mg(2+) serves as cofactor. It depends on Mn(2+) as a cofactor. Expressed in brain, kidney, lung, liver, testis, ovary, adrenal gland, heart, prostate, gastrointestinal tract, and spleen. Distributed throughout both adult and embryonic central nervous system and pancreatic islet cells.

It is found in the membrane. The catalysed reaction is L-threonyl-[receptor-protein] + ATP = O-phospho-L-threonyl-[receptor-protein] + ADP + H(+). It carries out the reaction L-seryl-[receptor-protein] + ATP = O-phospho-L-seryl-[receptor-protein] + ADP + H(+). Functionally, serine/threonine protein kinase which forms a receptor complex on ligand binding. The receptor complex consists of 2 type II and 2 type I transmembrane serine/threonine kinases. Type II receptors phosphorylate and activate type I receptors which autophosphorylate, then bind and activate SMAD transcriptional regulators, SMAD2 and SMAD3. Receptor for activin AB, activin B, activin E and NODAL. Upon NODAL binding, activation results in increased apoptosis and reduced proliferation through suppression of AKT signaling and the activation of Smad2-dependent signaling pathway in pancreatic beta-cells, trophoblasts, epithelial or neuronal cells. Acts as a positive regulator for macrophage activation partially through down-regulation of PPARG expression. The sequence is that of Activin receptor type-1C from Rattus norvegicus (Rat).